The chain runs to 106 residues: MMKVLVVVALLVTLISYSSSEGIGDLEADELLSLMANEQTRAKACTPRYYDCSHDRHSCCRSSMFKDVCTCFYPEGGDNKEVCTCQQPKHLKYMEKATDKIKNLFG.

The first 20 residues, 1-20, serve as a signal peptide directing secretion; it reads MMKVLVVVALLVTLISYSSS. Residues 21–41 constitute a propeptide that is removed on maturation; that stretch reads EGIGDLEADELLSLMANEQTR. Disulfide bonds link cysteine 45-cysteine 60, cysteine 52-cysteine 69, cysteine 59-cysteine 85, and cysteine 71-cysteine 83.

Belongs to the neurotoxin 19 (CSTX) family. 02 (D7) subfamily. As to expression, expressed by the venom gland.

The protein resides in the secreted. The chain is Toxin-like structure LSTX-D4 from Lycosa singoriensis (Wolf spider).